The chain runs to 1895 residues: 1,3-beta-glucan synthase component GSC2 (1895 aa).

Composition is skewed to polar residues over residues 1–16 (MSYN…YSNG) and 25–34 (PTYQVTQDQS). Disordered regions lie at residues 1-143 (MSYN…PYGN) and 269-292 (ARKA…EETL). Over 1–473 (MSYNDPNLNG…WLHLVTNFNR (473 aa)) the chain is Extracellular. Over residues 65-78 (QFPQGQDPSQDQGP) the composition is skewed to low complexity. Polar residues-rich tracts occupy residues 79-107 (YNND…SDFS) and 115-141 (TYPN…STPY). The segment covering 269–278 (ARKAKKKNKK) has biased composition (basic residues). Lysine 278 participates in a covalent cross-link: Glycyl lysine isopeptide (Lys-Gly) (interchain with G-Cter in ubiquitin). A phosphothreonine mark is found at threonine 288 and threonine 291. Lysine 405 participates in a covalent cross-link: Glycyl lysine isopeptide (Lys-Gly) (interchain with G-Cter in ubiquitin). A helical membrane pass occupies residues 474-494 (IWIMHISVYWMYCAYNAPTFY). The Cytoplasmic segment spans residues 495–511 (THNYQQLVDNQPLAAYK). A helical membrane pass occupies residues 512-532 (WATAALGGTVASLIQVAATLC). Residues 533 to 550 (EWSFVPRKWAGAQHLSRR) lie on the Extracellular side of the membrane. A helical transmembrane segment spans residues 551-571 (FWFLCVIMGINLGPVIFVFAY). The Cytoplasmic portion of the chain corresponds to 572–582 (DKDTVYSTAAH). The chain crosses the membrane as a helical span at residues 583-603 (VVGAVMFFVAVATLVFFSVMP). The Extracellular portion of the chain corresponds to 604-1579 (LGGLFTSYMK…DASRAHRTNL (976 aa)). Residues lysine 929, lysine 934, lysine 1558, and lysine 1566 each participate in a glycyl lysine isopeptide (Lys-Gly) (interchain with G-Cter in ubiquitin) cross-link. A helical membrane pass occupies residues 1580 to 1600 (IMAEIIPCAIYAAGCFIAFTF). Topologically, residues 1601 to 1620 (INAQTGVKTTDEDRVNSTLR) are cytoplasmic. The helical transmembrane segment at 1621 to 1641 (IIICTLAPIVIDIGVLFFCMG) threads the bilayer. Residues 1642–1758 (LSCCSGPLLG…LTAKVIELSE (117 aa)) lie on the Extracellular side of the membrane. Residues 1759–1779 (FAADFVLGHVILIFQLPVICI) form a helical membrane-spanning segment. Residues 1780-1821 (PKIDKFHSIMLFWLKPSRQIRPPIYSLKQARLRKRMVRRYCS) are Cytoplasmic-facing. A helical membrane pass occupies residues 1822-1842 (LYFLVLIIFAGCIVGPAVASA). Residues 1843–1895 (HVPKDLGSGLTGTFHNLVQPRNVSNNDTGSQMSTYKSHYYTHTPSLKTWSTIK) lie on the Extracellular side of the membrane.

This sequence belongs to the glycosyltransferase 48 family. Component of the 1,3-beta-glucan synthase (GS) complex, composed of two alternate catalytic subunits FKS1 or GSC2, and a regulatory subunit RHO1. Interacts with SMK1.

It is found in the membrane. The catalysed reaction is [(1-&gt;3)-beta-D-glucosyl](n) + UDP-alpha-D-glucose = [(1-&gt;3)-beta-D-glucosyl](n+1) + UDP + H(+). Its function is as follows. Alternate catalytic subunit of the 1,3-beta-glucan synthase (GS) complex. Synthesizes 1,3-beta-glucan, a major structural component of the yeast cell wall. Required for spore wall assembly. Negative regulation of activity by SMK1 is important for spore wall deposition. Activity is positively regulated by RHO1. In Saccharomyces cerevisiae (strain ATCC 204508 / S288c) (Baker's yeast), this protein is 1,3-beta-glucan synthase component GSC2.